A 526-amino-acid polypeptide reads, in one-letter code: ATP synthase subunit alpha (526 aa).

171–178 (GDRQTGKT) provides a ligand contact to ATP.

The protein belongs to the ATPase alpha/beta chains family. F-type ATPases have 2 components, CF(1) - the catalytic core - and CF(0) - the membrane proton channel. CF(1) has five subunits: alpha(3), beta(3), gamma(1), delta(1), epsilon(1). CF(0) has four main subunits: a(1), b(1), b'(1) and c(9-12).

It is found in the cell inner membrane. The enzyme catalyses ATP + H2O + 4 H(+)(in) = ADP + phosphate + 5 H(+)(out). Its function is as follows. Produces ATP from ADP in the presence of a proton gradient across the membrane. The alpha chain is a regulatory subunit. This chain is ATP synthase subunit alpha, found in Chlorobaculum tepidum (strain ATCC 49652 / DSM 12025 / NBRC 103806 / TLS) (Chlorobium tepidum).